Consider the following 429-residue polypeptide: Glutamate-1-semialdehyde 2,1-aminomutase (429 aa).

Lys-267 is subject to N6-(pyridoxal phosphate)lysine.

This sequence belongs to the class-III pyridoxal-phosphate-dependent aminotransferase family. HemL subfamily. Homodimer. It depends on pyridoxal 5'-phosphate as a cofactor.

Its subcellular location is the cytoplasm. It carries out the reaction (S)-4-amino-5-oxopentanoate = 5-aminolevulinate. It participates in porphyrin-containing compound metabolism; protoporphyrin-IX biosynthesis; 5-aminolevulinate from L-glutamyl-tRNA(Glu): step 2/2. This Stenotrophomonas maltophilia (strain K279a) protein is Glutamate-1-semialdehyde 2,1-aminomutase.